Reading from the N-terminus, the 878-residue chain is Alanine--tRNA ligase (878 aa).

4 residues coordinate Zn(2+): His-570, His-574, Cys-672, and His-676. Positions 844-864 are disordered; sequence GGKGGGGRPDMAQAGGPDASA. Over residues 855-864 the composition is skewed to low complexity; the sequence is AQAGGPDASA.

The protein belongs to the class-II aminoacyl-tRNA synthetase family. The cofactor is Zn(2+).

The protein resides in the cytoplasm. The catalysed reaction is tRNA(Ala) + L-alanine + ATP = L-alanyl-tRNA(Ala) + AMP + diphosphate. Its function is as follows. Catalyzes the attachment of alanine to tRNA(Ala) in a two-step reaction: alanine is first activated by ATP to form Ala-AMP and then transferred to the acceptor end of tRNA(Ala). Also edits incorrectly charged Ser-tRNA(Ala) and Gly-tRNA(Ala) via its editing domain. In Paramagnetospirillum magneticum (strain ATCC 700264 / AMB-1) (Magnetospirillum magneticum), this protein is Alanine--tRNA ligase.